A 605-amino-acid polypeptide reads, in one-letter code: Probable potassium transport system protein Kup (605 aa).

Helical transmembrane passes span 17-37, 45-65, 96-116, 140-160, 165-185, 211-231, 246-266, 286-306, 338-358, 367-387, 394-414, and 417-437; these read GLVFGDIGTSPIYTLTVIFAL, VFGILSMVVWTLIILVTVEYA, IAFVGFLSFVGVSLLLGDGVI, LGTLILIAALIAVVLFIFQFK, VAAAFGPLMVLWFGALTVSGL, GISAFFVLSEVILCATGGEAL, AWYFVFVALIINYLGQGAFAL, LYIPFLILTILATVIASQALI, IYIGSVNWFLMLLVIFIMLIF, AYGLAVTGTMTITGIMMTIIF, WKVPVAVAVTIVDVVFLISNL, and LPHGGYWSIILASVPFATILI.

Belongs to the HAK/KUP transporter (TC 2.A.72) family.

It is found in the cell inner membrane. The catalysed reaction is K(+)(in) + H(+)(in) = K(+)(out) + H(+)(out). Its function is as follows. Transport of potassium into the cell. Likely operates as a K(+):H(+) symporter. The polypeptide is Probable potassium transport system protein Kup (Geotalea uraniireducens (strain Rf4) (Geobacter uraniireducens)).